A 360-amino-acid polypeptide reads, in one-letter code: Catabolic L-serine/threonine dehydratase (360 aa).

Serine 2 carries the post-translational modification N-acetylserine. Position 37 is an N6-(pyridoxal phosphate)lysine (lysine 37).

This sequence belongs to the serine/threonine dehydratase family. Pyridoxal 5'-phosphate serves as cofactor.

The protein localises to the mitochondrion. The catalysed reaction is L-serine = pyruvate + NH4(+). It carries out the reaction L-threonine = 2-oxobutanoate + NH4(+). This is Catabolic L-serine/threonine dehydratase (CHA1) from Saccharomyces cerevisiae (strain ATCC 204508 / S288c) (Baker's yeast).